We begin with the raw amino-acid sequence, 172 residues long: Ribosome maturation factor RimM (172 aa).

Residues E92–G167 enclose the PRC barrel domain.

It belongs to the RimM family. As to quaternary structure, binds ribosomal protein uS19.

The protein localises to the cytoplasm. Its function is as follows. An accessory protein needed during the final step in the assembly of 30S ribosomal subunit, possibly for assembly of the head region. Essential for efficient processing of 16S rRNA. May be needed both before and after RbfA during the maturation of 16S rRNA. It has affinity for free ribosomal 30S subunits but not for 70S ribosomes. This is Ribosome maturation factor RimM from Ehrlichia ruminantium (strain Gardel).